The chain runs to 447 residues: Chromosomal replication initiator protein DnaA (447 aa).

The domain I, interacts with DnaA modulators stretch occupies residues 1-74 (MENIEELWSA…MLLEVTGSEL (74 aa)). The tract at residues 74 to 108 (LNTKFIIPDSLEEIEEQKPMPKPKQSTDTGDSPKS) is domain II. The interval 85-107 (EEIEEQKPMPKPKQSTDTGDSPK) is disordered. Residues 97–107 (KQSTDTGDSPK) are compositionally biased toward polar residues. The segment at 109–325 (MLNSKYTFDT…GALIRVVAYS (217 aa)) is domain III, AAA+ region. 4 residues coordinate ATP: G153, G155, K156, and T157. The segment at 326 to 447 (SLVNQDIDAS…EELKEKLKSI (122 aa)) is domain IV, binds dsDNA.

The protein belongs to the DnaA family. Oligomerizes as a right-handed, spiral filament on DNA at oriC.

Its subcellular location is the cytoplasm. Functionally, plays an essential role in the initiation and regulation of chromosomal replication. ATP-DnaA binds to the origin of replication (oriC) to initiate formation of the DNA replication initiation complex once per cell cycle. Binds the DnaA box (a 9 base pair repeat at the origin) and separates the double-stranded (ds)DNA. Forms a right-handed helical filament on oriC DNA; dsDNA binds to the exterior of the filament while single-stranded (ss)DNA is stabiized in the filament's interior. The ATP-DnaA-oriC complex binds and stabilizes one strand of the AT-rich DNA unwinding element (DUE), permitting loading of DNA polymerase. After initiation quickly degrades to an ADP-DnaA complex that is not apt for DNA replication. Binds acidic phospholipids. In Oceanobacillus iheyensis (strain DSM 14371 / CIP 107618 / JCM 11309 / KCTC 3954 / HTE831), this protein is Chromosomal replication initiator protein DnaA.